Here is a 513-residue protein sequence, read N- to C-terminus: Lysine--tRNA ligase (513 aa).

Positions 423 and 430 each coordinate Mg(2+).

It belongs to the class-II aminoacyl-tRNA synthetase family. In terms of assembly, homodimer. Mg(2+) serves as cofactor.

It localises to the cytoplasm. It carries out the reaction tRNA(Lys) + L-lysine + ATP = L-lysyl-tRNA(Lys) + AMP + diphosphate. The polypeptide is Lysine--tRNA ligase (Anaeromyxobacter dehalogenans (strain 2CP-1 / ATCC BAA-258)).